The following is a 1221-amino-acid chain: Phosphoenolpyruvate carboxylase 2 (1221 aa).

H156 is an active-site residue. 2 disordered regions span residues 443–588 (TAAE…DPTF) and 642–661 (REPA…GGGG). Low complexity-rich tracts occupy residues 503 to 513 (TTTATAAAAAA) and 550 to 564 (PFRE…TAAS). Gly residues-rich tracts occupy residues 565-575 (GGAGGGGGGGA) and 648-661 (AHGG…GGGG). Residue K886 is part of the active site.

The protein belongs to the PEPCase type 1 family. It depends on Mg(2+) as a cofactor.

It is found in the cytoplasm. The catalysed reaction is oxaloacetate + phosphate = phosphoenolpyruvate + hydrogencarbonate. Through the carboxylation of phosphoenolpyruvate (PEP) it forms oxaloacetate, a four-carbon dicarboxylic acid source for the tricarboxylic acid cycle. In Chlamydomonas reinhardtii (Chlamydomonas smithii), this protein is Phosphoenolpyruvate carboxylase 2.